A 91-amino-acid chain; its full sequence is UPF0250 protein Lcho_4239 (91 aa).

Belongs to the UPF0250 family.

The protein is UPF0250 protein Lcho_4239 of Leptothrix cholodnii (strain ATCC 51168 / LMG 8142 / SP-6) (Leptothrix discophora (strain SP-6)).